The chain runs to 376 residues: Hydroxylysine kinase (376 aa).

Asp-229 functions as the Proton acceptor in the catalytic mechanism.

Belongs to the aminoglycoside phosphotransferase family.

The protein localises to the cytoplasm. The enzyme catalyses (5R)-5-hydroxy-L-lysine + GTP = (5R)-5-phosphooxy-L-lysine + GDP + H(+). Functionally, catalyzes the GTP-dependent phosphorylation of 5-hydroxy-L-lysine. In Mus musculus (Mouse), this protein is Hydroxylysine kinase (Hykk).